The following is a 346-amino-acid chain: Protease inhibitor Egf1.5b (346 aa).

The signal sequence occupies residues 1 to 28 (MYIDTGIMSNNIFLFAFFALVGLTRIEA). The 53-residue stretch at 52-104 (CRENEHYNSTRIECEDECNDRNNKLCYRFQQFCWCNEGYIRNSSHICVKLEDC) folds into the TIL domain.

This sequence belongs to the polydnaviridae EGF-like motif protein family. In terms of assembly, interacts with host PAP1, PAP3 and SPH2.

Its function is as follows. Counteracts the host humoral immune response by inhibiting the processing and the amidolytic activity of host PAP1 and PAP3. Thereby, melanization of host hemolymph, normally producing several reactive intermediates toxic for viruses, is deregulated and proper immune response cannot occur. The polypeptide is Protease inhibitor Egf1.5b (O5) (Microplitis demolitor (Parasitoid wasp)).